Here is a 221-residue protein sequence, read N- to C-terminus: Carotenogenesis protein CarR (221 aa).

The next 6 helical transmembrane spans lie at 56–76, 79–99, 107–127, 136–156, 166–186, and 191–211; these read LGLL…PLLL, APLL…ALSP, LGVG…GAPH, VCTV…LFAL, AVVA…LACE, and HVLS…VVIS.

The protein localises to the cell inner membrane. Its function is as follows. Negative regulator of the carotenoid synthesis regulon. It is probably inactivated by protoporphyrin IX in the presence of blue light. Inactivation of CarR leads to loss of negative control over the carotenogenesis protein CarQ. The sequence is that of Carotenogenesis protein CarR (carR) from Myxococcus xanthus.